The sequence spans 517 residues: UDP-N-acetylmuramoylalanine--D-glutamate ligase (517 aa).

143–149 (GTNGKTT) contributes to the ATP binding site.

It belongs to the MurCDEF family.

The protein localises to the cytoplasm. The catalysed reaction is UDP-N-acetyl-alpha-D-muramoyl-L-alanine + D-glutamate + ATP = UDP-N-acetyl-alpha-D-muramoyl-L-alanyl-D-glutamate + ADP + phosphate + H(+). The protein operates within cell wall biogenesis; peptidoglycan biosynthesis. In terms of biological role, cell wall formation. Catalyzes the addition of glutamate to the nucleotide precursor UDP-N-acetylmuramoyl-L-alanine (UMA). In Leifsonia xyli subsp. xyli (strain CTCB07), this protein is UDP-N-acetylmuramoylalanine--D-glutamate ligase.